The sequence spans 286 residues: Shikimate dehydrogenase (NADP(+)) (286 aa).

Shikimate-binding positions include 22-24 and Thr-71; that span reads SRS. The Proton acceptor role is filled by Lys-75. Residue Glu-87 participates in NADP(+) binding. Shikimate contacts are provided by Asn-96 and Asp-111. Residues 136–140, 160–165, and Ile-225 each bind NADP(+); these read GAGGA and NRTPER. Tyr-227 contributes to the shikimate binding site. Position 248 (Gly-248) interacts with NADP(+).

The protein belongs to the shikimate dehydrogenase family. As to quaternary structure, homodimer.

The enzyme catalyses shikimate + NADP(+) = 3-dehydroshikimate + NADPH + H(+). The protein operates within metabolic intermediate biosynthesis; chorismate biosynthesis; chorismate from D-erythrose 4-phosphate and phosphoenolpyruvate: step 4/7. In terms of biological role, involved in the biosynthesis of the chorismate, which leads to the biosynthesis of aromatic amino acids. Catalyzes the reversible NADPH linked reduction of 3-dehydroshikimate (DHSA) to yield shikimate (SA). This is Shikimate dehydrogenase (NADP(+)) from Sinorhizobium medicae (strain WSM419) (Ensifer medicae).